A 100-amino-acid polypeptide reads, in one-letter code: Large ribosomal subunit protein bL28 (100 aa).

The protein belongs to the bacterial ribosomal protein bL28 family.

The chain is Large ribosomal subunit protein bL28 from Ehrlichia chaffeensis (strain ATCC CRL-10679 / Arkansas).